A 496-amino-acid chain; its full sequence is Amino-acid acetyltransferase, mitochondrial (496 aa).

The region spanning tyrosine 333–threonine 493 is the N-acetyltransferase domain.

The protein belongs to the acetyltransferase family.

It is found in the mitochondrion. It carries out the reaction L-glutamate + acetyl-CoA = N-acetyl-L-glutamate + CoA + H(+). It participates in amino-acid biosynthesis; L-arginine biosynthesis; N(2)-acetyl-L-ornithine from L-glutamate: step 1/4. Functionally, N-acetylglutamate synthase involved in arginine biosynthesis. The sequence is that of Amino-acid acetyltransferase, mitochondrial (arg2) from Schizosaccharomyces japonicus (strain yFS275 / FY16936) (Fission yeast).